The primary structure comprises 364 residues: Rhomboid domain-containing protein 2 (364 aa).

5 helical membrane passes run 11–31, 63–83, 100–120, 158–178, and 184–204; these read WCLC…SLLV, LVTY…AIII, CFFT…FEAV, FGMV…SWLI, and LSNV…CYSI. 2 disordered regions span residues 242 to 282 and 317 to 364; these read AQSR…KLAS and SSVY…VPMP. Composition is skewed to polar residues over residues 267–276 and 317–329; these read HPVSQTQHAS and SSVY…TSLG.

This sequence belongs to the peptidase S54 family.

The protein localises to the golgi apparatus. It localises to the cis-Golgi network membrane. In Homo sapiens (Human), this protein is Rhomboid domain-containing protein 2 (RHBDD2).